The following is a 454-amino-acid chain: Immediate-early protein ICP-46 homolog (454 aa).

A coiled-coil region spans residues 330-357 (EKDIETIEKYEKTIQELIVELHNLYLKR). Residues 428–454 (SSPTASLSSLSPPSSNNNSPIRSPIRM) form a disordered region.

This sequence belongs to the IIV-6 393L family.

This chain is Immediate-early protein ICP-46 homolog, found in Invertebrate iridescent virus 6 (IIV-6).